The sequence spans 162 residues: Type IV major fimbrial protein FimA (162 aa).

A propeptide spans 1–7 (MKSLQKG) (leader sequence). The residue at position 8 (F8) is an N-methylphenylalanine. Residues 8–28 (FTLIELMIVVAIIGILAAFAI) form a helical membrane-spanning segment. C63 and C106 are oxidised to a cystine.

The protein belongs to the N-Me-Phe pilin family.

It is found in the fimbrium. The protein resides in the membrane. Its function is as follows. Major component of the type IV fimbriae that plays an essential role in twitching motility, natural transformation, and protease secretion. The sequence is that of Type IV major fimbrial protein FimA (fimA) from Dichelobacter nodosus (strain VCS1703A).